The following is a 231-amino-acid chain: NADH-quinone oxidoreductase subunit C (231 aa).

This sequence belongs to the complex I 30 kDa subunit family. NDH-1 is composed of 14 different subunits. Subunits NuoB, C, D, E, F, and G constitute the peripheral sector of the complex.

The protein localises to the cell membrane. The catalysed reaction is a quinone + NADH + 5 H(+)(in) = a quinol + NAD(+) + 4 H(+)(out). Its function is as follows. NDH-1 shuttles electrons from NADH, via FMN and iron-sulfur (Fe-S) centers, to quinones in the respiratory chain. The immediate electron acceptor for the enzyme in this species is believed to be a menaquinone. Couples the redox reaction to proton translocation (for every two electrons transferred, four hydrogen ions are translocated across the cytoplasmic membrane), and thus conserves the redox energy in a proton gradient. The sequence is that of NADH-quinone oxidoreductase subunit C from Mycobacterium sp. (strain JLS).